The chain runs to 342 residues: Ankyrin repeat domain-containing protein 2A (342 aa).

The disordered stretch occupies residues 1 to 41 (MASNSEKNPLLSDEKPKSTEENKSSKPESASGSSTSSAMPG). Residues 12 to 26 (SDEKPKSTEENKSSK) are compositionally biased toward basic and acidic residues. Residues 27–37 (PESASGSSTSS) show a composition bias toward low complexity. ANK repeat units lie at residues 217–246 (EEES…NKDE), 250–279 (EGRT…SVNA), 283–312 (NKNT…AVTL), and 316–342 (DEKT…DAFL). The a 1,2-diacyl-3-O-(beta-D-galactosyl)-sn-glycerol site is built by His223 and Glu246. Residues Tyr294 and Arg296 each coordinate a 1,2-diacyl-sn-glycero-3-phospho-(1'-sn-glycerol).

Interacts with TOM20-4, CYTB5-E, CBR1, APX3, APX5, TOC34 and GRF6. Binds to chloroplast outer envelope membrane (OEM) protein targeting signals, as well as to chloroplasts. Interacts with OEP7. Binds to HSP17.8 via its ankyrin repeats, this interaction enhances chaperone activity and chloroplast binding. Also interacts with HSP17.4A, HSP17.6A and HSP18.1. Binds specifically to two chloroplast glycolipids, monogalactosyldiacylglycerol (MGDG) and phosphatidylglycerol (PG). As to expression, ubiquitously expressed at basal level.

It is found in the cytoplasm. The protein resides in the nucleus. The protein localises to the plastid. It localises to the chloroplast outer membrane. Exhibits chaperone activity toward chloroplast outer envelope membrane, mitochondrion outer membrane, endoplasmic reticulum membrane and peroxisomal proteins, by recruiting specific proteins containing a single transmembrane associated with an AKR2A-binding sequence (ABS) and subsequently binding glycolipids (e.g. monogalactosyldiacylglycerol (MGDG) and phosphatidylglycerol (PG)) present in the membrane of the target organelle. Seems to be involved in the regulation of hydrogen peroxide levels during biotic and abiotic stresses by optimizing the ascorbate peroxidase 3 (APX3) hydrogen peroxide-degrading activity. This regulation might be monitored by GRF6. Cytosolic targeting factor for chloroplast outer membrane (COM) proteins that mediates sorting and targeting of nascent chloroplast outer envelope membrane (OEM) proteins to the chloroplast. Facilitates the targeting of OEP7 to chloroplasts. Facilitates the targeting of APX3 to peroxisomes. Involved in cellular metabolism (e.g. peroxisome activity) and required for plant growth and development. The chain is Ankyrin repeat domain-containing protein 2A from Arabidopsis thaliana (Mouse-ear cress).